The following is a 150-amino-acid chain: Large ribosomal subunit protein bL9 (150 aa).

This sequence belongs to the bacterial ribosomal protein bL9 family.

Its function is as follows. Binds to the 23S rRNA. In Alkalilimnicola ehrlichii (strain ATCC BAA-1101 / DSM 17681 / MLHE-1), this protein is Large ribosomal subunit protein bL9.